The following is a 320-amino-acid chain: Ubiquinone biosynthesis protein COQ4, mitochondrial (320 aa).

The transit peptide at 1–31 directs the protein to the mitochondrion; it reads MFARSALGRSDQLVTALNSQKRQFVLTAATT. The Zn(2+) site is built by His205, Asp206, His209, and Glu221.

Belongs to the COQ4 family. As to quaternary structure, component of a multi-subunit COQ enzyme complex, composed of at least COQ3, COQ4, COQ5, COQ6, COQ7 and COQ9. It depends on Zn(2+) as a cofactor.

Its subcellular location is the mitochondrion inner membrane. The enzyme catalyses a 4-hydroxy-3-methoxy-5-(all-trans-polyprenyl)benzoate + H(+) = a 2-methoxy-6-(all-trans-polyprenyl)phenol + CO2. Its pathway is cofactor biosynthesis; ubiquinone biosynthesis. In terms of biological role, lyase that catalyzes the C1-decarboxylation of 4-hydroxy-3-methoxy-5-(all-trans-polyprenyl)benzoic acid into 2-methoxy-6-(all-trans-polyprenyl)phenol during ubiquinone biosynthesis. This Scheffersomyces stipitis (strain ATCC 58785 / CBS 6054 / NBRC 10063 / NRRL Y-11545) (Yeast) protein is Ubiquinone biosynthesis protein COQ4, mitochondrial.